Reading from the N-terminus, the 313-residue chain is Tyrosine recombinase XerC (313 aa).

Residues 11–97 (NSLQKPLERF…SLRSFFDFLI (87 aa)) enclose the Core-binding (CB) domain. Residues 118 to 298 (PLPKNLDVDE…DFQHLAQAYD (181 aa)) form the Tyr recombinase domain. Residues arginine 157, lysine 181, histidine 250, arginine 253, and histidine 276 contribute to the active site. The active-site O-(3'-phospho-DNA)-tyrosine intermediate is tyrosine 285.

Belongs to the 'phage' integrase family. XerC subfamily. Forms a cyclic heterotetrameric complex composed of two molecules of XerC and two molecules of XerD.

Its subcellular location is the cytoplasm. In terms of biological role, site-specific tyrosine recombinase, which acts by catalyzing the cutting and rejoining of the recombining DNA molecules. The XerC-XerD complex is essential to convert dimers of the bacterial chromosome into monomers to permit their segregation at cell division. It also contributes to the segregational stability of plasmids. The sequence is that of Tyrosine recombinase XerC from Vibrio campbellii (strain ATCC BAA-1116).